We begin with the raw amino-acid sequence, 213 residues long: Signal recognition particle sec65 subunit (213 aa).

Residues 176–213 (MAALAGMGGPAPPMPTPQASSSQRKQKSIEPEYDLDLE) are disordered.

It belongs to the SRP19 family. In terms of assembly, fungal signal recognition particle consists of a 7S RNA molecule (scR1) and at least six protein subunits: srp72, srp68, srp54, sec65, srp21 and srp14.

It localises to the cytoplasm. It is found in the nucleus. Functionally, signal-recognition-particle assembly has a crucial role in targeting secretory proteins to the rough endoplasmic reticulum membrane. It must be involved intimately in the translocation of a wide variety of protein substrates. The chain is Signal recognition particle sec65 subunit (sec65) from Schizosaccharomyces pombe (strain 972 / ATCC 24843) (Fission yeast).